A 485-amino-acid chain; its full sequence is Aspartyl/glutamyl-tRNA(Asn/Gln) amidotransferase subunit B (485 aa).

Belongs to the GatB/GatE family. GatB subfamily. In terms of assembly, heterotrimer of A, B and C subunits.

The enzyme catalyses L-glutamyl-tRNA(Gln) + L-glutamine + ATP + H2O = L-glutaminyl-tRNA(Gln) + L-glutamate + ADP + phosphate + H(+). The catalysed reaction is L-aspartyl-tRNA(Asn) + L-glutamine + ATP + H2O = L-asparaginyl-tRNA(Asn) + L-glutamate + ADP + phosphate + 2 H(+). Functionally, allows the formation of correctly charged Asn-tRNA(Asn) or Gln-tRNA(Gln) through the transamidation of misacylated Asp-tRNA(Asn) or Glu-tRNA(Gln) in organisms which lack either or both of asparaginyl-tRNA or glutaminyl-tRNA synthetases. The reaction takes place in the presence of glutamine and ATP through an activated phospho-Asp-tRNA(Asn) or phospho-Glu-tRNA(Gln). The protein is Aspartyl/glutamyl-tRNA(Asn/Gln) amidotransferase subunit B of Borrelia garinii subsp. bavariensis (strain ATCC BAA-2496 / DSM 23469 / PBi) (Borreliella bavariensis).